The sequence spans 457 residues: Argininosuccinate lyase (457 aa).

The protein belongs to the lyase 1 family. Argininosuccinate lyase subfamily.

It localises to the cytoplasm. It catalyses the reaction 2-(N(omega)-L-arginino)succinate = fumarate + L-arginine. The protein operates within amino-acid biosynthesis; L-arginine biosynthesis; L-arginine from L-ornithine and carbamoyl phosphate: step 3/3. This is Argininosuccinate lyase from Staphylococcus carnosus (strain TM300).